A 98-amino-acid polypeptide reads, in one-letter code: Citrate lyase acyl carrier protein (98 aa).

Position 14 is an O-(phosphoribosyl dephospho-coenzyme A)serine (Ser-14).

This sequence belongs to the CitD family. Oligomer with a subunit composition of (alpha,beta,gamma)6.

Its subcellular location is the cytoplasm. In terms of biological role, covalent carrier of the coenzyme of citrate lyase. This chain is Citrate lyase acyl carrier protein, found in Shigella flexneri.